Reading from the N-terminus, the 175-residue chain is Translation initiation factor IF-3 (175 aa).

It belongs to the IF-3 family. As to quaternary structure, monomer.

The protein localises to the cytoplasm. IF-3 binds to the 30S ribosomal subunit and shifts the equilibrium between 70S ribosomes and their 50S and 30S subunits in favor of the free subunits, thus enhancing the availability of 30S subunits on which protein synthesis initiation begins. The protein is Translation initiation factor IF-3 of Staphylococcus aureus (strain NCTC 8325 / PS 47).